A 386-amino-acid chain; its full sequence is Probable serine/threonine-protein kinase PBL23 (386 aa).

Residue C5 is the site of S-palmitoyl cysteine attachment. The 279-residue stretch at 82 to 360 (FNPDNQLGEG…SDVVTALEYL (279 aa)) folds into the Protein kinase domain. ATP-binding positions include 88-96 (LGEGGFGRV) and K111. Residue D210 is the Proton acceptor of the active site. Residues 365 to 386 (TEEDGQTVEGEEEEEEDERSKL) are disordered. Acidic residues predominate over residues 368-386 (DGQTVEGEEEEEEDERSKL).

Belongs to the protein kinase superfamily. Ser/Thr protein kinase family.

The protein resides in the cell membrane. The catalysed reaction is L-seryl-[protein] + ATP = O-phospho-L-seryl-[protein] + ADP + H(+). It carries out the reaction L-threonyl-[protein] + ATP = O-phospho-L-threonyl-[protein] + ADP + H(+). Functionally, may be involved in plant defense signaling. The protein is Probable serine/threonine-protein kinase PBL23 of Arabidopsis thaliana (Mouse-ear cress).